An 803-amino-acid polypeptide reads, in one-letter code: E3 ubiquitin-protein ligase UHRF2 (803 aa).

Residues 1–78 (MWIQVRTIDG…IQLLVRPDSS (78 aa)) form the Ubiquitin-like domain. Polar residues-rich tracts occupy residues 79 to 96 (LPST…SSHN), 106 to 115 (GGSSSQPSTS), 167 to 181 (KNGS…NVNH), and 189 to 200 (KLDNVPSTSNSD). 2 disordered regions span residues 79-115 (LPST…PSTS) and 154-200 (RASD…SNSD). Positions 118 to 312 (TCLIDPGFGL…VDEIFKIEKP (195 aa)) are required for interaction with histone H3. Residues 195-289 (STSNSDSVAA…KEVRVKVFLG (95 aa)) are interaction with PCNP. The segment at 340–396 (DKTCHMCSCHKCGEKRDPNMQLLCDECNMAYHIYCLSPPLDKVPEEEYWYCPSCKTD) adopts a PHD-type zinc-finger fold. The tract at residues 415–645 (KMPSASTESR…LQYPAGYPSE (231 aa)) is methyl-CpG binding and interaction with HDAC1. Positions 449–613 (GPIPGIPVGS…FLVWRYLLRR (165 aa)) constitute a YDG domain. The disordered stretch occupies residues 643–676 (PSEKEGKKTKGQSKKQGSEATKRPASDDECPGDS). Residues 658-668 (QGSEATKRPAS) show a composition bias toward basic and acidic residues. Serine 668 is modified (phosphoserine). Residues 734–773 (CVCCQELVYQPVTTECFHNVCKDCLQRSFKAQVFSCPACR) form an RING-type zinc finger.

As to quaternary structure, homodimer; disulfide-linked. Binds methylated CpG containing oligonucleotides. Interacts with H3; the interaction has a preference for the 'Lys-9' trimethylated form of H3 (H3K9me3). Interacts with PCNP. Interacts with HDAC1. Interacts directly with CCNE1; the interaction ubiquitinates CCNE1 and appears independent of CCNE1 phosphorylation. Interacts with CCND1; the interaction ubiquitinates CCND1 and appears independent of CCND1 phosphorylation. Interacts with p53/TP53 and RB1. Interacts with UBE2I. Interacts with ZNF618. Interacts with UHRF1. Interacts with FANCD2. Interacts with ATR. Interacts with PCNA. Post-translationally, may be autoubiquitinated; which may lead to proteasomal degradation. Phosphorylated. Phosphorylation may be mediated by CDK2. In terms of processing, autosumoylated. Mostly detected in several tissues, including the thymus, spleen, lung, adrenal gland, and ovary. In addition, found in several tissues in the brain (cerebellum, hippocampus, and cerebral cortex).

The protein localises to the nucleus. It is found in the chromosome. The enzyme catalyses S-ubiquitinyl-[E2 ubiquitin-conjugating enzyme]-L-cysteine + [acceptor protein]-L-lysine = [E2 ubiquitin-conjugating enzyme]-L-cysteine + N(6)-ubiquitinyl-[acceptor protein]-L-lysine.. It functions in the pathway protein modification; protein ubiquitination. With respect to regulation, E3 ligase activity is robustly activated by 5-hydroxy-methylcytosine. Functionally, E3 ubiquitin ligase that plays important roles in DNA methylation, histone modifications, cell cycle and DNA repair. Acts as a specific reader for 5-hydroxymethylcytosine (5hmC) and thereby recruits various substrates to these sites to ubiquitinate them. This activity also allows the maintenance of 5mC levels at specific genomic loci and regulates neuron-related gene expression. Participates in cell cycle regulation by ubiquitinating cyclins CCND1 and CCNE1 and thus inducing G1 arrest. Also ubiquitinates PCNP leading to its degradation by the proteasome. Plays an active role in DNA damage repair by ubiquitinating p21/CDKN1A leading to its proteasomal degradation. Also promotes DNA repair by acting as an interstrand cross-links (ICLs) sensor. Mechanistically, cooperates with UHRF1 to ensure recruitment of FANCD2 to ICLs, leading to FANCD2 monoubiquitination and subsequent activation. Contributes to UV-induced DNA damage response by physically interacting with ATR in response to irradiation, thereby promoting ATR activation. The polypeptide is E3 ubiquitin-protein ligase UHRF2 (Uhrf2) (Mus musculus (Mouse)).